Reading from the N-terminus, the 115-residue chain is uncharacterized protein (115 aa).

The first 29 residues, 1–29, serve as a signal peptide directing secretion; sequence MKKAMAILAVLAAAAVICGLLFFHNDVTD.

This is an uncharacterized protein from Bacillus subtilis (strain 168).